Reading from the N-terminus, the 160-residue chain is Cytochrome b6-f complex subunit 4 (160 aa).

3 helical membrane-spanning segments follow: residues 36-56 (LLYIFPVVILGTIACVVGLAV), 95-115 (LLGIALQTLIPLGLMILPFIE), and 128-148 (IAMSLFLFGTFLTIYLGIGAC).

The protein belongs to the cytochrome b family. PetD subfamily. In terms of assembly, the 4 large subunits of the cytochrome b6-f complex are cytochrome b6, subunit IV (17 kDa polypeptide, PetD), cytochrome f and the Rieske protein, while the 4 small subunits are PetG, PetL, PetM and PetN. The complex functions as a dimer.

The protein localises to the cellular thylakoid membrane. In terms of biological role, component of the cytochrome b6-f complex, which mediates electron transfer between photosystem II (PSII) and photosystem I (PSI), cyclic electron flow around PSI, and state transitions. The polypeptide is Cytochrome b6-f complex subunit 4 (Prochlorococcus marinus (strain MIT 9312)).